The chain runs to 1588 residues: Ubiquitin carboxyl-terminal hydrolase 54 (1588 aa).

R12 bears the Omega-N-methylarginine mark. The 322-residue stretch at 31-352 (KGLSNEPGQN…QPLLLLYADP (322 aa)) folds into the USP domain. Catalysis depends on C42, which acts as the Nucleophile. Zn(2+)-binding residues include H67, C69, C74, C77, H133, C145, C150, H153, C166, C169, C225, and C229. Catalysis depends on H302, which acts as the Proton acceptor. Composition is skewed to basic and acidic residues over residues 382–391 (GHLTDSECNQ) and 424–434 (SEGETLKEKQA). Disordered stretches follow at residues 382–519 (GHLT…PTWR), 555–577 (FTPD…RSQH), and 601–624 (ESGY…PPDS). At S424 the chain carries Phosphoserine. Residues 453–471 (TVSNMIHSRPSLASQTSAG) show a composition bias toward polar residues. A compositionally biased stretch (low complexity) spans 499–513 (TESTSSEAKSSSSSK). Basic and acidic residues predominate over residues 555–572 (FTPDEVSKPTANDIKDGG). A compositionally biased stretch (low complexity) spans 601–616 (ESGYESSERNSSSPVS). Residues S613 and S616 each carry the phosphoserine modification. Positions 682–712 (ELDELQEEVVRRAQEQELRKKREKELEAAKG) form a coiled coil. Disordered regions lie at residues 801–834 (RSLQ…PQPT), 1089–1182 (QNTS…PDMY), 1221–1242 (SQVK…SHPR), and 1491–1561 (WGNL…RSPG). The span at 808–826 (QQQASSQQPVQPSASLPSQ) shows a compositional bias: low complexity. The span at 1126–1147 (GREHCRWVKQPRSPDGRERPPC) shows a compositional bias: basic and acidic residues. S1138 bears the Phosphoserine mark. The span at 1510 to 1524 (PSSNLHVPLRSTWNS) shows a compositional bias: polar residues. Residues 1536–1547 (RRIDMPPDDDWR) are compositionally biased toward basic and acidic residues.

It belongs to the peptidase C19 family.

The catalysed reaction is Thiol-dependent hydrolysis of ester, thioester, amide, peptide and isopeptide bonds formed by the C-terminal Gly of ubiquitin (a 76-residue protein attached to proteins as an intracellular targeting signal).. Deubiquitinase that specifically mediates 'Lys-63'-linked deubiquitination of substrates with a polyubiquitin chain composed of at least 3 ubiquitins. Specifically recognizes ubiquitin chain in position S2 and catalyzes cleavage of polyubiquitin within 'Lys-63'-linked chains. Not able to deubiquitinate substrates with shorter ubiquitin chains. Mediates deubiquitination of PLK4, maintaining PLK4 stability by reducing its ubiquitination-mediated degradation. The protein is Ubiquitin carboxyl-terminal hydrolase 54 (Usp54) of Mus musculus (Mouse).